Consider the following 347-residue polypeptide: Coproporphyrinogen-III oxidase, aerobic 2 (347 aa).

The tract at residues 1–31 is disordered; sequence MGRHSDNSLQESANHTVLLTSPTNTIPKDSR. Over residues 7 to 31 the composition is skewed to polar residues; the sequence is NSLQESANHTVLLTSPTNTIPKDSR. Positions 75–84 are important for dimerization; sequence VIREGRVFEQ. Substrate is bound at residue S119. The active-site Proton donor is H133. Residues 135–137 and 305–310 each bind substrate; these read NYR and KGRTES. Residues 287–322 are important for dimerization; the sequence is YVEFNLVYDRGTVFGLQTKGRTESILMSLPPLARWE.

The protein belongs to the aerobic coproporphyrinogen-III oxidase family. In terms of assembly, homodimer.

The protein resides in the cytoplasm. The catalysed reaction is coproporphyrinogen III + O2 + 2 H(+) = protoporphyrinogen IX + 2 CO2 + 2 H2O. The protein operates within porphyrin-containing compound metabolism; protoporphyrin-IX biosynthesis; protoporphyrinogen-IX from coproporphyrinogen-III (O2 route): step 1/1. Functionally, key enzyme in heme biosynthesis. Catalyzes the oxidative decarboxylation of propionic acid side chains of rings A and B of coproporphyrinogen III. The protein is Coproporphyrinogen-III oxidase, aerobic 2 of Nostoc sp. (strain PCC 7120 / SAG 25.82 / UTEX 2576).